Here is an 84-residue protein sequence, read N- to C-terminus: MVVIRLARGGSKKRPFFNIVATDSRNRRDGRFIERVGFYNPLASEGEEGLRVVADRLAYWQGVGAQLSPTVARLVKQNAAKAAA.

Belongs to the bacterial ribosomal protein bS16 family.

This chain is Small ribosomal subunit protein bS16, found in Cupriavidus pinatubonensis (strain JMP 134 / LMG 1197) (Cupriavidus necator (strain JMP 134)).